A 102-amino-acid chain; its full sequence is Putative pterin-4-alpha-carbinolamine dehydratase (102 aa).

Belongs to the pterin-4-alpha-carbinolamine dehydratase family.

The enzyme catalyses (4aS,6R)-4a-hydroxy-L-erythro-5,6,7,8-tetrahydrobiopterin = (6R)-L-erythro-6,7-dihydrobiopterin + H2O. The chain is Putative pterin-4-alpha-carbinolamine dehydratase from Burkholderia ambifaria (strain MC40-6).